The primary structure comprises 258 residues: HTH-type transcriptional repressor GlcR (258 aa).

The HTH deoR-type domain occupies Gln-3 to Leu-58. Residues Ile-20–Asp-39 constitute a DNA-binding region (H-T-H motif).

Its function is as follows. Plays a role in carbon catabolite repression (CCR). Specifically required for transcriptional repression of the levanase operon by glucose but not by other sugars. The protein is HTH-type transcriptional repressor GlcR (glcR) of Bacillus subtilis (strain 168).